The chain runs to 337 residues: UDP-3-O-acylglucosamine N-acyltransferase 1 (337 aa).

The active-site Proton acceptor is His-238.

Belongs to the transferase hexapeptide repeat family. LpxD subfamily. As to quaternary structure, homotrimer.

The catalysed reaction is a UDP-3-O-[(3R)-3-hydroxyacyl]-alpha-D-glucosamine + a (3R)-hydroxyacyl-[ACP] = a UDP-2-N,3-O-bis[(3R)-3-hydroxyacyl]-alpha-D-glucosamine + holo-[ACP] + H(+). Its pathway is bacterial outer membrane biogenesis; LPS lipid A biosynthesis. Its function is as follows. Catalyzes the N-acylation of UDP-3-O-acylglucosamine using 3-hydroxyacyl-ACP as the acyl donor. Is involved in the biosynthesis of lipid A, a phosphorylated glycolipid that anchors the lipopolysaccharide to the outer membrane of the cell. This is UDP-3-O-acylglucosamine N-acyltransferase 1 from Koribacter versatilis (strain Ellin345).